The sequence spans 80 residues: Exodeoxyribonuclease 7 small subunit (80 aa).

The protein belongs to the XseB family. As to quaternary structure, heterooligomer composed of large and small subunits.

The protein localises to the cytoplasm. The enzyme catalyses Exonucleolytic cleavage in either 5'- to 3'- or 3'- to 5'-direction to yield nucleoside 5'-phosphates.. Functionally, bidirectionally degrades single-stranded DNA into large acid-insoluble oligonucleotides, which are then degraded further into small acid-soluble oligonucleotides. The protein is Exodeoxyribonuclease 7 small subunit of Streptomyces avermitilis (strain ATCC 31267 / DSM 46492 / JCM 5070 / NBRC 14893 / NCIMB 12804 / NRRL 8165 / MA-4680).